Reading from the N-terminus, the 238-residue chain is MGNSALKAHIETAQKTGVFQLTDKGLTEFPEDLQRLSGNLRTIDLSSNKIEVVPPMMGKFSLLKSLSLNNNRISRLPDELCKLKKLETLHLNGNQISQLPADFVQLLALKTLNLSGNRLKTLPAQLFKLRNLDVVDLSKNRIQAIPDEVSGLQAIELNLNQNQISQISVNISHCPRLKVLRLEENCLELSMLPPSILSDSQISLLAVEGNLFEIKKLRDLEGYDKYMEKFTATRKKFA.

LRR repeat units follow at residues 39 to 60 (NLRTIDLSSNKIEVVPPMMGKF), 62 to 84 (LLKSLSLNNNRISRLPDELCKLK), 85 to 106 (KLETLHLNGNQISQLPADFVQL), 108 to 129 (ALKTLNLSGNRLKTLPAQLFKL), 131 to 152 (NLDVVDLSKNRIQAIPDEVSGL), 153 to 175 (QAIELNLNQNQISQISVNISHCP), 176 to 196 (RLKVLRLEENCLELSMLPPSI), and 201 to 221 (QISLLAVEGNLFEIKKLRDLE).

This Xenopus laevis (African clawed frog) protein is Leucine-rich repeat-containing protein 57 (lrrc57).